The following is a 267-amino-acid chain: MSELKNGTTEPKKNETTQSDSKSKSTSTNKSSVPPASLVPVQPTALTSRDKTTQRLIVVLSQACLETYKMNSGGPGGDRFALLNCDDHQGLLRKMGRDIAEARPDITHQCLLTLLDSPINKAGRLQVYIQTARGVLIEVNPSVRIPRTFKRFSGLMVQLLHKLSIRSENSKEVLLKVIKNPITDHLPTKCRKVTLSFDAELKRVQDYVTTLDENESICVFVGAMARGKDNFADEFVDEKIGLSDYPLSASVACSKFCHGCEDVWGIY.

The segment at 1–46 is disordered; sequence MSELKNGTTEPKKNETTQSDSKSKSTSTNKSSVPPASLVPVQPTAL. Low complexity predominate over residues 16 to 32; sequence TTQSDSKSKSTSTNKSS. S-adenosyl-L-methionine is bound by residues Leu-195, Gly-222, 227-229, and 242-247; these read GKD and LSDYPL.

Belongs to the class IV-like SAM-binding methyltransferase superfamily. RNA methyltransferase NEP1 family. Homodimer.

Its subcellular location is the nucleus. It is found in the nucleolus. It carries out the reaction a pseudouridine in rRNA + S-adenosyl-L-methionine = an N(1)-methylpseudouridine in rRNA + S-adenosyl-L-homocysteine + H(+). In terms of biological role, S-adenosyl-L-methionine-dependent pseudouridine N(1)-methyltransferase that methylates the pseudouridine corresponding to position 1189 (Psi1189) in S.cerevisiae 18S rRNA. Involved the biosynthesis of the hypermodified N1-methyl-N3-(3-amino-3-carboxypropyl) pseudouridine (m1acp3-Psi) conserved in eukaryotic 18S rRNA. Also has an essential role in 40S ribosomal subunit biogenesis independent on its methyltransferase activity, facilitating the incorporation of ribosomal protein S19 during the formation of pre-ribosomes. The chain is Ribosomal RNA small subunit methyltransferase NEP1 from Candida albicans (Yeast).